The sequence spans 327 residues: Asnovolin J 5',6'-dehydrogenase nvfM (327 aa).

Residues 9–29 (VAIVGASGVTGGSIVNGLLAL) traverse the membrane as a helical segment. Residues 13 to 19 (GASGVTG) and lysine 47 each bind NADP(+). The active-site Proton acceptor is the lysine 130.

Belongs to the NmrA-type oxidoreductase family.

Its subcellular location is the membrane. The enzyme catalyses asnovolin K + AH2 = asnovolin A + A. It catalyses the reaction chermesin D methyl ester + AH2 = asnovolin J + A. It participates in secondary metabolite biosynthesis; terpenoid biosynthesis. Its function is as follows. Asnovolin J 5',6'-dehydrogenase; part of the gene cluster that mediates the biosynthesis of novofumigatonin, a heavily oxygenated meroterpenoid containing a unique orthoester moiety. The first step of the pathway is the synthesis of 3,5-dimethylorsellinic acid (DMOA) by the polyketide synthase nvfA via condensation of one acetyl-CoA starter unit with 3 malonyl-CoA units and 2 methylations. DMOA is then converted to farnesyl-DMOA by the farnesyltransferase nvfB. Epoxydation by FAD-dependent monooxygenase nvfK, followed by a protonation-initiated cyclization catalyzed by the terpene cyclase nvfL leads to the production of asnavolin H. The short chain dehydrogenase nvfC then as a 3-OH dehydrogenase of asnovolin H to yield chemesin D. There are two branches to synthesize asnovolin A from chemesin D. In one branch, chemesin D undergoes Baeyer-Villiger oxidation by nvfH, methylation by nvfJ, and enoyl reduction by the nvfM D enoylreductase that reduces the double bond between C-5'and C-6', to form respectively asnovolin I, asnovolin K, and asnovolin A. In the other branch, the methylation precedes the Baeyer-Villiger oxidation and the enoyl reduction to yield asnovolin A via the asnovolin J intermediate. Asnovolin A is further converted to fumigatonoid A by the Fe(II)/2-oxoglutarate-dependent dioxygenase nvfI that catalyzes an endoperoxidation reaction. The alpha/beta hydrolase nvfD then acts as an epimerase that converts fumigatonoid A to its C-5' epimer, which then undergoes spontaneous or nvfD-catalyzed lactonization. The following step utilizes the ketoreductase nvfG to produce fumigatonoid B. The dioxygenase nvfE further converts fumigatonoid B into fumigatonoid C. Finally the Fe(II)/2-oxoglutarate-dependent dioxygenase nvfF catalyzes two rounds of oxidation to transform fumigatonoid C into the end product, novofumigatonin A. This is Asnovolin J 5',6'-dehydrogenase nvfM from Aspergillus novofumigatus (strain IBT 16806).